We begin with the raw amino-acid sequence, 189 residues long: Cancer/testis antigen family 45 member A1 (189 aa).

Positions 1-23 (MTDKTEKVAVDPETVFKRPRECD) are enriched in basic and acidic residues. Disordered regions lie at residues 1–27 (MTDKTEKVAVDPETVFKRPRECDSPSY) and 83–118 (RMMQKPGSNAPVGGNVTSSFSGDDLECRETASSPKS).

The protein belongs to the CT45 family. In terms of tissue distribution, testis specific. Expressed in cancer cell lines.

It localises to the nucleus. The protein is Cancer/testis antigen family 45 member A1 of Homo sapiens (Human).